The following is a 230-amino-acid chain: Orotidine 5'-phosphate decarboxylase (230 aa).

Substrate contacts are provided by residues D11, K34, 61 to 70 (DLKLHDIPNT), T117, R179, Q188, G208, and R209. The Proton donor role is filled by K63.

Belongs to the OMP decarboxylase family. Type 1 subfamily. As to quaternary structure, homodimer.

It catalyses the reaction orotidine 5'-phosphate + H(+) = UMP + CO2. It functions in the pathway pyrimidine metabolism; UMP biosynthesis via de novo pathway; UMP from orotate: step 2/2. Catalyzes the decarboxylation of orotidine 5'-monophosphate (OMP) to uridine 5'-monophosphate (UMP). In Streptococcus equi subsp. zooepidemicus (strain H70), this protein is Orotidine 5'-phosphate decarboxylase.